The following is a 141-amino-acid chain: ATP synthase epsilon chain 1 (141 aa).

It belongs to the ATPase epsilon chain family. In terms of assembly, F-type ATPases have 2 components, CF(1) - the catalytic core - and CF(0) - the membrane proton channel. CF(1) has five subunits: alpha(3), beta(3), gamma(1), delta(1), epsilon(1). CF(0) has three main subunits: a, b and c.

The protein localises to the cell inner membrane. Its function is as follows. Produces ATP from ADP in the presence of a proton gradient across the membrane. The protein is ATP synthase epsilon chain 1 of Paraburkholderia xenovorans (strain LB400).